Reading from the N-terminus, the 479-residue chain is Putative F-box protein At1g67390 (479 aa).

An F-box domain is found at 40–88 (DDRISKLPDDVLVMILASLSTEDALKTSVLSTRWKNVWKQVPYLHFDLL).

The sequence is that of Putative F-box protein At1g67390 from Arabidopsis thaliana (Mouse-ear cress).